Reading from the N-terminus, the 193-residue chain is Orotate phosphoribosyltransferase (193 aa).

117-125 (EDVVTTGLS) contacts 5-phospho-alpha-D-ribose 1-diphosphate. Orotate contacts are provided by T121 and R149.

The protein belongs to the purine/pyrimidine phosphoribosyltransferase family. PyrE subfamily. In terms of assembly, homodimer. Mg(2+) is required as a cofactor.

It catalyses the reaction orotidine 5'-phosphate + diphosphate = orotate + 5-phospho-alpha-D-ribose 1-diphosphate. The protein operates within pyrimidine metabolism; UMP biosynthesis via de novo pathway; UMP from orotate: step 1/2. Catalyzes the transfer of a ribosyl phosphate group from 5-phosphoribose 1-diphosphate to orotate, leading to the formation of orotidine monophosphate (OMP). The sequence is that of Orotate phosphoribosyltransferase from Erythrobacter litoralis (strain HTCC2594).